A 187-amino-acid chain; its full sequence is Large ribosomal subunit protein bL12cx (187 aa).

Residues 1 to 54 (MASTTLSIATTIRSSSPLTSASTHHFLSKPTAIEFPFRLSSSSSHRAINLRPIS) constitute a chloroplast transit peptide.

Belongs to the bacterial ribosomal protein bL12 family.

It localises to the plastid. The protein resides in the chloroplast. The sequence is that of Large ribosomal subunit protein bL12cx (RPL12C) from Arabidopsis thaliana (Mouse-ear cress).